The chain runs to 465 residues: Uridine kinase-like protein 5 (465 aa).

The segment at 26-230 (LKQPFVIGVA…IVQHIRTKLC (205 aa)) is uridine kinase. The interval 240–465 (NIFIISSTFQ…SLSTNLKLRS (226 aa)) is uracil phosphoribosyltransferase. GTP is bound by residues Lys264, Arg273, and 307 to 310 (CKRL). 2 residues coordinate 5-phospho-alpha-D-ribose 1-diphosphate: Arg317 and Arg342. Residue Arg362 participates in GTP binding. Residues Asp368, 373–376 (SGYS), and Glu439 each bind 5-phospho-alpha-D-ribose 1-diphosphate. 438–440 (GEF) is a uracil binding site.

This sequence in the N-terminal section; belongs to the uridine kinase family. In the C-terminal section; belongs to the UPRTase family. Mg(2+) is required as a cofactor.

It catalyses the reaction UMP + diphosphate = 5-phospho-alpha-D-ribose 1-diphosphate + uracil. It carries out the reaction cytidine + ATP = CMP + ADP + H(+). The catalysed reaction is uridine + ATP = UMP + ADP + H(+). The protein operates within pyrimidine metabolism; UMP biosynthesis via salvage pathway; UMP from uracil: step 1/1. It participates in pyrimidine metabolism; CTP biosynthesis via salvage pathway; CTP from cytidine: step 1/3. It functions in the pathway pyrimidine metabolism; UMP biosynthesis via salvage pathway; UMP from uridine: step 1/1. Its activity is regulated as follows. Allosterically activated by GTP. In terms of biological role, involved in the pyrimidine salvage pathway. The protein is Uridine kinase-like protein 5 (UKL5) of Arabidopsis thaliana (Mouse-ear cress).